Here is a 37-residue protein sequence, read N- to C-terminus: Chorion class CB protein PCH12 (37 aa).

The tract at residues 1-26 (DGIFPTVGAGDVWYGCGDGAVGIVAE) is central domain. Residues 27-37 (TPFASTTTNPA) are right arm.

This sequence belongs to the chorion protein family.

In terms of biological role, this protein is one of many from the eggshell of the silk moth. The protein is Chorion class CB protein PCH12 of Antheraea polyphemus (Polyphemus moth).